A 117-amino-acid polypeptide reads, in one-letter code: Large ribosomal subunit protein uL18 (117 aa).

Belongs to the universal ribosomal protein uL18 family. In terms of assembly, part of the 50S ribosomal subunit; part of the 5S rRNA/L5/L18/L25 subcomplex. Contacts the 5S and 23S rRNAs.

Functionally, this is one of the proteins that bind and probably mediate the attachment of the 5S RNA into the large ribosomal subunit, where it forms part of the central protuberance. The polypeptide is Large ribosomal subunit protein uL18 (Vibrio vulnificus (strain CMCP6)).